The primary structure comprises 730 residues: MQDDPENSKLYDLLNSHLDVHGRSNEEPRQTGDSRSQSSGNTGENEEDIAFASGLNGGTFDSMLEALPDDLYFTDFVSPFTAAATTSVTTKTVKDTTPATNHMDDDIAMFDSLATTQPIDIAASNQQNGEIAQLWDFNVDQFNMTPSNSSGSATISAPNSFTSDIPQYNHGSLGNSVSKSSLFPYNSSTSNSNINQPSINNNSNTNAQSHHSFNIYKLQNNNSSSSAMNITNNNNSNNSNIQHPFLKKSDSIGLSSSNTTNSVRKNSLIKPMSSTSLANFKRAASVSSSISNMEPSGQNKKPLIQCFNCKTFKTPLWRRSPEGNTLCNACGLFQKLHGTMRPLSLKSDVIKKRISKKRAKQTDPNIAQNTPSAPATASTSVTTTNAKPIRSRKKSLQQNSLSRVIPEEIIRDNIGNTNNILNVNRGGYNFNSVPSPVLMNSQSYNSSNANFNGASNANLNSNNLMRHNSNTVTPNFRRSSRRSSTSSNTSSSSKSSSRSVVPILPKPSPNSANSQQFNMNMNLMNTTNNVSAGNSVASSPRIISSANFNSNSPLQQNLLSNSFQRQGMNIPRRKMSRNASYSSSFMAASLQQLHEQQQVDVNSNTNTNSNRQNWNSSNSVSTNSRSSNFVSQKPNFDIFNTPVDSPSVSRPSSRKSHTSLLSQQLQNSESNSFISNHKFNNRLSSDSTSPIKYEADVSAGGKISEDNSTKGSSKESSAIADELDWLKFGI.

The disordered stretch occupies residues 1-45 (MQDDPENSKLYDLLNSHLDVHGRSNEEPRQTGDSRSQSSGNTGEN). The segment covering 18-32 (LDVHGRSNEEPRQTG) has biased composition (basic and acidic residues). A compositionally biased stretch (polar residues) spans 33-43 (DSRSQSSGNTG). The 9aaTAD signature appears at 129–137 (GEIAQLWDF). 2 disordered regions span residues 187 to 208 (SSTS…TNAQ) and 224 to 262 (SSSA…TTNS). Residues 224-240 (SSSAMNITNNNNSNNSN) are compositionally biased toward low complexity. Position 251 is a phosphoserine (Ser-251). The segment covering 252–262 (IGLSSSNTTNS) has biased composition (polar residues). Ser-267 and Ser-285 each carry phosphoserine. A GATA-type zinc finger spans residues 306 to 330 (CFNCKTFKTPLWRRSPEGNTLCNAC). Disordered regions lie at residues 355–398 (SKKR…SLQQ) and 449–516 (ANFN…NSQQ). Composition is skewed to low complexity over residues 370–384 (TPSA…VTTT), 449–470 (ANFN…HNSN), and 482–499 (RSST…SSRS). Ser-469 carries the phosphoserine modification. A phosphoserine mark is found at Ser-552 and Ser-562. Disordered stretches follow at residues 593–673 (LHEQ…SNSF) and 696–717 (DVSA…KESS). Composition is skewed to low complexity over residues 596-631 (QQQV…NFVS), 641-651 (TPVDSPSVSRP), and 658-672 (TSLL…ESNS).

The protein localises to the nucleus. Its function is as follows. Positive nitrogen regulatory protein. Required for the activation of transcription of a number of genes (including the allantoin pathway genes) in response to the replacement of glutamine by glutamate as source of nitrogen. Binds the nitrogen upstream activation sequence of GLN1, the gene encoding glutamine synthetase. URE2 may catalytically inactivate GLN3 in response to an increase in the intracellular concentration of glutamine. The polypeptide is Nitrogen regulatory protein GLN3 (GLN3) (Saccharomyces cerevisiae (strain ATCC 204508 / S288c) (Baker's yeast)).